A 424-amino-acid chain; its full sequence is Dihydroorotase (424 aa).

Residues His-60 and His-62 each contribute to the Zn(2+) site. Substrate-binding positions include His-62–Arg-64 and Asn-94. The Zn(2+) site is built by Asp-151, His-178, and His-231. Asn-277 serves as a coordination point for substrate. Asp-304 is a binding site for Zn(2+). Asp-304 is an active-site residue. Residue His-308 coordinates substrate.

The protein belongs to the metallo-dependent hydrolases superfamily. DHOase family. Class I DHOase subfamily. Zn(2+) serves as cofactor.

It catalyses the reaction (S)-dihydroorotate + H2O = N-carbamoyl-L-aspartate + H(+). Its pathway is pyrimidine metabolism; UMP biosynthesis via de novo pathway; (S)-dihydroorotate from bicarbonate: step 3/3. Catalyzes the reversible cyclization of carbamoyl aspartate to dihydroorotate. In Clostridium acetobutylicum (strain ATCC 824 / DSM 792 / JCM 1419 / IAM 19013 / LMG 5710 / NBRC 13948 / NRRL B-527 / VKM B-1787 / 2291 / W), this protein is Dihydroorotase.